A 284-amino-acid polypeptide reads, in one-letter code: 2-dehydro-3-deoxyphosphooctonate aldolase (284 aa).

Belongs to the KdsA family.

The protein localises to the cytoplasm. It catalyses the reaction D-arabinose 5-phosphate + phosphoenolpyruvate + H2O = 3-deoxy-alpha-D-manno-2-octulosonate-8-phosphate + phosphate. It functions in the pathway carbohydrate biosynthesis; 3-deoxy-D-manno-octulosonate biosynthesis; 3-deoxy-D-manno-octulosonate from D-ribulose 5-phosphate: step 2/3. It participates in bacterial outer membrane biogenesis; lipopolysaccharide biosynthesis. This Serratia proteamaculans (strain 568) protein is 2-dehydro-3-deoxyphosphooctonate aldolase.